We begin with the raw amino-acid sequence, 75 residues long: Small ribosomal subunit protein bS18c (75 aa).

This sequence belongs to the bacterial ribosomal protein bS18 family. As to quaternary structure, part of the 30S ribosomal subunit.

Its subcellular location is the plastid. It localises to the chloroplast. This chain is Small ribosomal subunit protein bS18c, found in Adiantum capillus-veneris (Maidenhair fern).